Reading from the N-terminus, the 482-residue chain is 7-deoxyloganetic acid glucosyl transferase (482 aa).

The active-site Proton acceptor is histidine 22. Histidine 22 contacts an anthocyanidin. Aspartate 127 acts as the Charge relay in catalysis. Residues threonine 149, alanine 362, glutamine 364, histidine 379, tryptophan 382, asparagine 383, serine 384, and glutamate 387 each contribute to the UDP-alpha-D-glucose site. Alanine 402 serves as a coordination point for an anthocyanidin. UDP-alpha-D-glucose is bound by residues aspartate 403 and glutamine 404.

Belongs to the UDP-glycosyltransferase family. In terms of tissue distribution, expressed in the leaf internal phloem-associated parenchyma (IPAP) inside the mesophyll. Mostly observed in leaves, roots and stems, and, to a lower extent, in flowers.

The protein localises to the nucleus. Its subcellular location is the cytoplasm. The protein resides in the cytosol. The enzyme catalyses 7-deoxyloganetate + UDP-alpha-D-glucose = 7-deoxyloganate + UDP + H(+). It functions in the pathway alkaloid biosynthesis. Component of the seco-iridoid and derivatives monoterpenoid indole alkaloids (MIAs, e.g. vincristine, quinine, and strychnine) biosynthesis pathway. Catalyzes the glucosylation of 7-deoxyloganetic acid to form 7-deoxyloganic acid using UDP-glucose as the sugar donor. Inactive with loganetic acid, loganetin, iridodial, iridotrial, 8-OH-geraniol, jasmonic acid, gibberellic acid, indole acetic acid, salicylic acid, abscisic acid, zeatin and luteolin. The sequence is that of 7-deoxyloganetic acid glucosyl transferase from Catharanthus roseus (Madagascar periwinkle).